Reading from the N-terminus, the 278-residue chain is Large ribosomal subunit protein uL2c (278 aa).

A disordered region spans residues 224-256 (NPVDHPHGGGEGRAPIGRKKPTTPWGYPALGRK).

This sequence belongs to the universal ribosomal protein uL2 family. As to quaternary structure, part of the 50S ribosomal subunit.

The protein localises to the plastid. In Cuscuta exaltata (Tall dodder), this protein is Large ribosomal subunit protein uL2c (rpl2).